The following is a 228-amino-acid chain: ATP-dependent dethiobiotin synthetase BioD (228 aa).

13 to 18 (DIGKTF) is a binding site for ATP. Position 17 (Thr17) interacts with Mg(2+). The active site involves Lys38. Ser42 lines the substrate pocket. Residues Asp55, 116–119 (EGSG), 179–180 (NK), and 208–210 (PKI) contribute to the ATP site. 2 residues coordinate Mg(2+): Asp55 and Glu116.

Belongs to the dethiobiotin synthetase family. As to quaternary structure, homodimer. Mg(2+) is required as a cofactor.

It localises to the cytoplasm. The enzyme catalyses (7R,8S)-7,8-diammoniononanoate + CO2 + ATP = (4R,5S)-dethiobiotin + ADP + phosphate + 3 H(+). Its pathway is cofactor biosynthesis; biotin biosynthesis; biotin from 7,8-diaminononanoate: step 1/2. In terms of biological role, catalyzes a mechanistically unusual reaction, the ATP-dependent insertion of CO2 between the N7 and N8 nitrogen atoms of 7,8-diaminopelargonic acid (DAPA, also called 7,8-diammoniononanoate) to form a ureido ring. The sequence is that of ATP-dependent dethiobiotin synthetase BioD from Clostridium perfringens (strain 13 / Type A).